We begin with the raw amino-acid sequence, 680 residues long: DNA-directed RNA polymerase subunit beta' (680 aa).

Positions 69, 71, 87, and 90 each coordinate Zn(2+). Positions 489, 491, and 493 each coordinate Mg(2+).

This sequence belongs to the RNA polymerase beta' chain family. RpoC1 subfamily. In terms of assembly, in plastids the minimal PEP RNA polymerase catalytic core is composed of four subunits: alpha, beta, beta', and beta''. When a (nuclear-encoded) sigma factor is associated with the core the holoenzyme is formed, which can initiate transcription. Mg(2+) is required as a cofactor. Requires Zn(2+) as cofactor.

It is found in the plastid. The protein resides in the chloroplast. It catalyses the reaction RNA(n) + a ribonucleoside 5'-triphosphate = RNA(n+1) + diphosphate. In terms of biological role, DNA-dependent RNA polymerase catalyzes the transcription of DNA into RNA using the four ribonucleoside triphosphates as substrates. This Capsella bursa-pastoris (Shepherd's purse) protein is DNA-directed RNA polymerase subunit beta'.